A 195-amino-acid polypeptide reads, in one-letter code: Peptidyl-tRNA hydrolase (195 aa).

Residue Y14 coordinates tRNA. H19 (proton acceptor) is an active-site residue. 2 residues coordinate tRNA: Y64 and N66.

It belongs to the PTH family. As to quaternary structure, monomer.

Its subcellular location is the cytoplasm. The enzyme catalyses an N-acyl-L-alpha-aminoacyl-tRNA + H2O = an N-acyl-L-amino acid + a tRNA + H(+). Its function is as follows. Hydrolyzes ribosome-free peptidyl-tRNAs (with 1 or more amino acids incorporated), which drop off the ribosome during protein synthesis, or as a result of ribosome stalling. Catalyzes the release of premature peptidyl moieties from peptidyl-tRNA molecules trapped in stalled 50S ribosomal subunits, and thus maintains levels of free tRNAs and 50S ribosomes. This is Peptidyl-tRNA hydrolase from Desulforudis audaxviator (strain MP104C).